A 343-amino-acid chain; its full sequence is Probable fructokinase-7 (343 aa).

An N-acetylglycine modification is found at G2.

This sequence belongs to the carbohydrate kinase PfkB family.

It catalyses the reaction D-fructose + ATP = D-fructose 6-phosphate + ADP + H(+). It functions in the pathway glycan biosynthesis; starch biosynthesis. May play an important role in maintaining the flux of carbon towards starch formation. The chain is Probable fructokinase-7 from Arabidopsis thaliana (Mouse-ear cress).